The chain runs to 808 residues: Copal-8-ol diphosphate hydratase, chloroplastic (808 aa).

A chloroplast-targeting transit peptide spans 1-50 (MAFTFTSAHLFLPVTENHSVHVNYSIPPGNWRLWSTAKGGSNKLDIRRLR). A coiled-coil region spans residues 190 to 219 (DKCQKGLKFFRDNISKLEKENVEASAQMLS). K256 provides a ligand contact to substrate. Mg(2+)-binding residues include D391 and D393. The DXDD motif motif lies at 391-394 (DLDD). Position 477 (K477) interacts with substrate.

It belongs to the terpene synthase family. Mg(2+) serves as cofactor. Expressed in stems, leaves and trichomes. Not detected in roots and seeds. Higher expression in young leaves than in fully expanded leaves.

It is found in the plastid. The protein resides in the chloroplast. It catalyses the reaction (2E,6E,10E)-geranylgeranyl diphosphate + H2O = 8-hydroxycopalyl diphosphate. The protein operates within secondary metabolite biosynthesis; terpenoid biosynthesis. Its function is as follows. Involved in the biosynthesis of oxygen-containing labdane-type diterpenes that may be implicated in direct and indirect defense mechanisms. No activity with geranyl diphosphate or farnesyl diphosphate as substrate. This chain is Copal-8-ol diphosphate hydratase, chloroplastic, found in Cistus creticus subsp. creticus (Rock rose).